Reading from the N-terminus, the 506-residue chain is 2,3-bisphosphoglycerate-independent phosphoglycerate mutase (506 aa).

The Mn(2+) site is built by aspartate 13 and serine 63. Serine 63 acts as the Phosphoserine intermediate in catalysis. Substrate is bound by residues histidine 124, 153–154 (RD), arginine 183, arginine 189, 254–257 (RADR), and lysine 330. Mn(2+)-binding residues include aspartate 396, histidine 400, aspartate 437, histidine 438, and histidine 456.

Belongs to the BPG-independent phosphoglycerate mutase family. In terms of assembly, monomer. Mn(2+) serves as cofactor.

The catalysed reaction is (2R)-2-phosphoglycerate = (2R)-3-phosphoglycerate. It functions in the pathway carbohydrate degradation; glycolysis; pyruvate from D-glyceraldehyde 3-phosphate: step 3/5. Functionally, catalyzes the interconversion of 2-phosphoglycerate and 3-phosphoglycerate. This Cereibacter sphaeroides (strain ATCC 17029 / ATH 2.4.9) (Rhodobacter sphaeroides) protein is 2,3-bisphosphoglycerate-independent phosphoglycerate mutase.